A 317-amino-acid chain; its full sequence is Nucleosome assembly protein 1;4 (317 aa).

The short motif at 52–67 (LSPKVTKRVLFLKDIQ) is the Nuclear export signal element. Positions 214–219 (KKKTKK) match the Nuclear localization signal motif. The tract at residues 297-317 (ALVDEDDSDDNDDDDNDEKSD) is disordered. Residues 298 to 317 (LVDEDDSDDNDDDDNDEKSD) are compositionally biased toward acidic residues.

It belongs to the nucleosome assembly protein (NAP) family. Can form homomeric and heteromeric protein complexes with NAP1;1, NAP1;2 and NAP1;3. Binds histone H2A. Expressed in the root segment covering the apical end of the differentiation zone, the elongation zone of the root and the mature pollen within the anthers of open flowers.

Its subcellular location is the nucleus. It localises to the cytoplasm. In terms of biological role, may modulate chromatin structure by regulation of nucleosome assembly/disassembly. The protein is Nucleosome assembly protein 1;4 (NAP1;4) of Arabidopsis thaliana (Mouse-ear cress).